Here is a 210-residue protein sequence, read N- to C-terminus: 3-oxo-tetronate 4-phosphate decarboxylase (210 aa).

Glu74 (proton acceptor) is an active-site residue. 3 residues coordinate Zn(2+): Glu74, His93, and His95. Residue Tyr120 is the Proton donor of the active site. Residue His160 participates in Zn(2+) binding.

The protein belongs to the aldolase class II family. AraD/FucA subfamily. Zn(2+) is required as a cofactor.

It carries out the reaction 3-dehydro-4-O-phospho-D-erythronate + H(+) = dihydroxyacetone phosphate + CO2. The catalysed reaction is 3-dehydro-4-O-phospho-L-erythronate + H(+) = dihydroxyacetone phosphate + CO2. Catalyzes the decarboxylation of 3-oxo-tetronate 4-phosphate to dihydroxyacetone phosphate (DHAP) and CO(2). The sequence is that of 3-oxo-tetronate 4-phosphate decarboxylase from Haemophilus influenzae (strain ATCC 51907 / DSM 11121 / KW20 / Rd).